Here is a 427-residue protein sequence, read N- to C-terminus: Serine--tRNA ligase (427 aa).

231 to 233 (TAE) serves as a coordination point for L-serine. An ATP-binding site is contributed by 262–264 (RSE). Glu285 provides a ligand contact to L-serine. Position 349–352 (349–352 (EISS)) interacts with ATP. Ser385 contributes to the L-serine binding site.

This sequence belongs to the class-II aminoacyl-tRNA synthetase family. Type-1 seryl-tRNA synthetase subfamily. Homodimer. The tRNA molecule binds across the dimer.

It localises to the cytoplasm. It catalyses the reaction tRNA(Ser) + L-serine + ATP = L-seryl-tRNA(Ser) + AMP + diphosphate + H(+). It carries out the reaction tRNA(Sec) + L-serine + ATP = L-seryl-tRNA(Sec) + AMP + diphosphate + H(+). Its pathway is aminoacyl-tRNA biosynthesis; selenocysteinyl-tRNA(Sec) biosynthesis; L-seryl-tRNA(Sec) from L-serine and tRNA(Sec): step 1/1. Catalyzes the attachment of serine to tRNA(Ser). Is also able to aminoacylate tRNA(Sec) with serine, to form the misacylated tRNA L-seryl-tRNA(Sec), which will be further converted into selenocysteinyl-tRNA(Sec). This chain is Serine--tRNA ligase, found in Sinorhizobium medicae (strain WSM419) (Ensifer medicae).